The following is a 548-amino-acid chain: CTL-like protein DDB_G0288717 (548 aa).

The disordered stretch occupies residues 1–44 (MWAPEEDYKQPLLTNSRVANNGNNNNSNGRGGSSSPSTRLQPEH). N25 is a glycosylation site (N-linked (GlcNAc...) asparagine). A helical transmembrane segment spans residues 52-72 (ILFTILFLLVIGGMAAISGIA). An N-linked (GlcNAc...) asparagine glycan is attached at N97. 4 helical membrane-spanning segments follow: residues 125–145 (DILIYSVLLAIALGAAWIQLL), 151–171 (FFIYFTLCVGVALVATLGGLF), 184–204 (MIVGGCIIICTLVLVVVIVYL), and 226–246 (PSVFVIASLVVLFFIGFIAYW). A glycan (N-linked (GlcNAc...) asparagine) is linked at N273. 2 helical membrane-spanning segments follow: residues 290–310 (NLMYFMIFGFFWASSFISAVF) and 350–370 (FGSLAFGSLLIAFIEFMAFML). N377 carries an N-linked (GlcNAc...) asparagine glycan. Transmembrane regions (helical) follow at residues 381 to 401 (KLVVMVVSCLQCILGCIESIV), 442 to 462 (FIGGLVLLLGKILGSAASALF), and 479 to 499 (IALSAIFAFCIFNLFTHIVGI). N544 carries an N-linked (GlcNAc...) asparagine glycan.

It belongs to the CTL (choline transporter-like) family.

Its subcellular location is the membrane. The chain is CTL-like protein DDB_G0288717 from Dictyostelium discoideum (Social amoeba).